The chain runs to 629 residues: Probable indole-3-acetic acid-amido synthetase GH3.4 (629 aa).

This sequence belongs to the IAA-amido conjugating enzyme family. As to expression, expressed in flowers.

Functionally, may catalyze the synthesis of indole-3-acetic acid (IAA)-amino acid conjugates, providing a mechanism for the plant to cope with the presence of excess auxin. The sequence is that of Probable indole-3-acetic acid-amido synthetase GH3.4 (GH3.4) from Oryza sativa subsp. japonica (Rice).